The chain runs to 298 residues: tRNA(Met) cytidine acetate ligase (298 aa).

Residues Ile6 to Gln19, Gly100, Asn157, and Arg182 each bind ATP.

The protein belongs to the TmcAL family.

It is found in the cytoplasm. It catalyses the reaction cytidine(34) in elongator tRNA(Met) + acetate + ATP = N(4)-acetylcytidine(34) in elongator tRNA(Met) + AMP + diphosphate. Functionally, catalyzes the formation of N(4)-acetylcytidine (ac(4)C) at the wobble position of elongator tRNA(Met), using acetate and ATP as substrates. First activates an acetate ion to form acetyladenylate (Ac-AMP) and then transfers the acetyl group to tRNA to form ac(4)C34. The polypeptide is tRNA(Met) cytidine acetate ligase (Mycoplasmopsis pulmonis (strain UAB CTIP) (Mycoplasma pulmonis)).